A 99-amino-acid chain; its full sequence is Aspartyl/glutamyl-tRNA(Asn/Gln) amidotransferase subunit C (99 aa).

The protein belongs to the GatC family. Heterotrimer of A, B and C subunits.

It catalyses the reaction L-glutamyl-tRNA(Gln) + L-glutamine + ATP + H2O = L-glutaminyl-tRNA(Gln) + L-glutamate + ADP + phosphate + H(+). The enzyme catalyses L-aspartyl-tRNA(Asn) + L-glutamine + ATP + H2O = L-asparaginyl-tRNA(Asn) + L-glutamate + ADP + phosphate + 2 H(+). Its function is as follows. Allows the formation of correctly charged Asn-tRNA(Asn) or Gln-tRNA(Gln) through the transamidation of misacylated Asp-tRNA(Asn) or Glu-tRNA(Gln) in organisms which lack either or both of asparaginyl-tRNA or glutaminyl-tRNA synthetases. The reaction takes place in the presence of glutamine and ATP through an activated phospho-Asp-tRNA(Asn) or phospho-Glu-tRNA(Gln). This chain is Aspartyl/glutamyl-tRNA(Asn/Gln) amidotransferase subunit C, found in Macrococcus caseolyticus (strain JCSC5402) (Macrococcoides caseolyticum).